The chain runs to 500 residues: 5-taurinomethyluridine-[tRNA] synthase subunit GTPB3, mitochondrial (500 aa).

Residues 1–73 constitute a mitochondrion transit peptide; it reads MHFISCCLRR…RRLTRSLPAP (73 aa). Residues Arg53, Glu111, and Lys151 each coordinate 5,10-methylenetetrahydrofolate. Residues 248–422 enclose the TrmE-type G domain; it reads GVHVVIAGST…LLTLLHNTLK (175 aa). Residues 255-262, 281-285, 302-305, and 373-376 contribute to the GTP site; these read GSTNAGKS, GTTRD, DTAG, and NESD. Residue Asn258 participates in K(+) binding. Positions 262 and 283 each coordinate Mg(2+). Lys500 is a 5,10-methylenetetrahydrofolate binding site.

It belongs to the TRAFAC class TrmE-Era-EngA-EngB-Septin-like GTPase superfamily. TrmE GTPase family. K(+) serves as cofactor.

The protein resides in the mitochondrion. The enzyme catalyses GTP + H2O = GDP + phosphate + H(+). In terms of biological role, GTPase component of the GTPBP3-MTO1 complex that catalyzes the 5-taurinomethyluridine (taum(5)U) modification at the 34th wobble position (U34) of mitochondrial tRNAs (mt-tRNAs), which plays a role in mt-tRNA decoding and mitochondrial translation. Taum(5)U formation on mammalian mt-tRNA requires the presence of both GTPBP3-mediated GTPase activity and MTO1 catalytic activity. The chain is 5-taurinomethyluridine-[tRNA] synthase subunit GTPB3, mitochondrial (gtpbp3) from Danio rerio (Zebrafish).